An 80-amino-acid chain; its full sequence is Defensin-like protein 1 (80 aa).

The first 29 residues, 1-29 (MAKFASIIALLFAALVLFAAFEAPTMVEA), serve as a signal peptide directing secretion. At Q30 the chain carries Pyrrolidone carboxylic acid. 4 disulfides stabilise this stretch: C33-C80, C44-C65, C50-C74, and C54-C76.

This sequence belongs to the DEFL family. As to quaternary structure, forms oligomers in its native state.

It localises to the secreted. Possesses antifungal activity sensitive to inorganic cations. The polypeptide is Defensin-like protein 1 (AFP1) (Raphanus sativus (Radish)).